Here is a 307-residue protein sequence, read N- to C-terminus: Protein PROCA1 (307 aa).

2 disordered regions span residues 134–155 (NHLS…EVPD) and 183–307 (RKEK…PNLS). Residues 200-214 (LKKKAKGKLTKKKTP) show a composition bias toward basic residues. A compositionally biased stretch (polar residues) spans 216–228 (KSESSPADLSQSV). Ser220 is modified (phosphoserine). Over residues 235–248 (PESSPESPGGLESE) the composition is skewed to low complexity. 5 positions are modified to phosphoserine: Ser250, Ser259, Ser260, Ser298, and Ser307. Residues 250–260 (SCERGKERPSS) show a composition bias toward basic and acidic residues.

This sequence belongs to the PROCA1 family.

The protein is Protein PROCA1 (Proca1) of Mus musculus (Mouse).